A 119-amino-acid polypeptide reads, in one-letter code: cAMP-responsive element-binding protein-like 2 (119 aa).

The disordered stretch occupies residues 1–23 (MDDSKIVAGKVKKPGKRGRKPAK). The span at 10–21 (KVKKPGKRGRKP) shows a compositional bias: basic residues. The 64-residue stretch at 23–86 (KIDLKAKLER…LAMDQGKIPS (64 aa)) folds into the bZIP domain. The tract at residues 29 to 60 (KLERSRQSARECRARKKLRYQYLEELVSSKER) is basic motif. Positions 62–69 (ICALREEL) are leucine-zipper. Positions 95 to 119 (DEQKTPQSCSNKTTKNSKYSSSSGI) are disordered. The span at 102-119 (SCSNKTTKNSKYSSSSGI) shows a compositional bias: low complexity.

It belongs to the bZIP family. ATF subfamily.

It localises to the nucleus. Its function is as follows. Probable regulator of creb1 transcriptional activity which is involved in adipose cells differentiation. May also play a regulatory role in the cell cycle. This is cAMP-responsive element-binding protein-like 2 (crebl2) from Danio rerio (Zebrafish).